A 976-amino-acid chain; its full sequence is Metabotropic glutamate receptor (976 aa).

An N-terminal signal peptide occupies residues 1-25 (MKQKNNNGTILVVVMVLSWSRVVDL). Over 26-626 (KSPSNTHTQD…IQYMKWNSLF (601 aa)) the chain is Extracellular. N-linked (GlcNAc...) asparagine glycosylation is found at Asn-112 and Asn-143. Residues Ser-158 and 179 to 181 (AST) each bind L-glutamate. N-linked (GlcNAc...) asparagine glycosylation is present at Asn-216. Residue Tyr-229 participates in L-glutamate binding. Asn-299 is a glycosylation site (N-linked (GlcNAc...) asparagine). Asp-310 contributes to the L-glutamate binding site. Asn-386 is a glycosylation site (N-linked (GlcNAc...) asparagine). Position 417 (Lys-417) interacts with L-glutamate. N-linked (GlcNAc...) asparagine glycans are attached at residues Asn-491 and Asn-524. A helical transmembrane segment spans residues 627-649 (ALIPMAIAIFGIALTSIVIVLFA). Residues 650–663 (KNHDTPLVRASGRE) are Cytoplasmic-facing. Residues 664–684 (LSYTLLFGILVCYCNTFALIA) form a helical membrane-spanning segment. Over 685–695 (KPTIGSCVLQR) the chain is Extracellular. The helical transmembrane segment at 696–714 (FGIGVGFSIIYSALLTKTN) threads the bilayer. The Cytoplasmic portion of the chain corresponds to 715-738 (RISRIFHSASKSAQRLKYISPQSQ). Residues 739 to 759 (VVITTSLIAIQVLITMIWMVV) form a helical membrane-spanning segment. Topologically, residues 760–782 (EPPGTRFYYPDRREVILKCKIQD) are extracellular. A helical membrane pass occupies residues 783-804 (MSFLFSQLYNMILITICTIYAI). Residues 805 to 817 (KTRKIPENFNESK) lie on the Cytoplasmic side of the membrane. Residues 818 to 840 (FIGFTMYTTCIIWLAFVPIYFGT) form a helical membrane-spanning segment. Residues 841–850 (GNSYEVQTTT) lie on the Extracellular side of the membrane. The helical transmembrane segment at 851–876 (LCISISLSASVALVCLYSPKVYILVF) threads the bilayer. Residues 877 to 976 (HPDKNVRKLT…VEPICHIVNK (100 aa)) are Cytoplasmic-facing. The disordered stretch occupies residues 920–946 (LTGGAVGTNASSSTLPTQNSPHLDEAS). The span at 927–946 (TNASSSTLPTQNSPHLDEAS) shows a compositional bias: polar residues.

Belongs to the G-protein coupled receptor 3 family. As to expression, expressed in the neurons of the larval CNS from the beginning of the first until the third instar. Expression in the third-instar larval CNS is restricted to a discrete number of somas and projections in the brain lobes and in the ventral ganglion. In the ventral nerve cord, expression is detected both in somas and projections. Expressed in the antennal lobes, the optic lobes, the central complex and the median bundle in the adult CNS.

Its subcellular location is the cell membrane. Functionally, G-protein coupled receptor for glutamate. Ligand binding causes a conformation change that triggers signaling via guanine nucleotide-binding proteins (G proteins) and modulates the activity of down-stream effectors. This chain is Metabotropic glutamate receptor (mGluR), found in Drosophila melanogaster (Fruit fly).